The following is a 170-amino-acid chain: Large ribosomal subunit protein bL9 (170 aa).

Residues Arg149–Glu170 form a disordered region. A compositionally biased stretch (acidic residues) spans Ala153 to Glu170.

It belongs to the bacterial ribosomal protein bL9 family.

Binds to the 23S rRNA. In Oleidesulfovibrio alaskensis (strain ATCC BAA-1058 / DSM 17464 / G20) (Desulfovibrio alaskensis), this protein is Large ribosomal subunit protein bL9.